We begin with the raw amino-acid sequence, 194 residues long: FMN-dependent NADH:quinone oxidoreductase (194 aa).

FMN contacts are provided by residues Ser10 and 90–93 (MYNL).

Belongs to the azoreductase type 1 family. As to quaternary structure, homodimer. FMN is required as a cofactor.

The enzyme catalyses 2 a quinone + NADH + H(+) = 2 a 1,4-benzosemiquinone + NAD(+). The catalysed reaction is N,N-dimethyl-1,4-phenylenediamine + anthranilate + 2 NAD(+) = 2-(4-dimethylaminophenyl)diazenylbenzoate + 2 NADH + 2 H(+). Functionally, quinone reductase that provides resistance to thiol-specific stress caused by electrophilic quinones. Also exhibits azoreductase activity. Catalyzes the reductive cleavage of the azo bond in aromatic azo compounds to the corresponding amines. In Haemophilus influenzae (strain 86-028NP), this protein is FMN-dependent NADH:quinone oxidoreductase.